The following is a 146-amino-acid chain: Ribonuclease H (146 aa).

Residues 1-138 form the RNase H type-1 domain; that stretch reads MYAWTDGACR…ADALANRGID (138 aa). Asp6, Glu44, Asp66, and Asp130 together coordinate Mg(2+).

It belongs to the RNase H family. As to quaternary structure, monomer. Requires Mg(2+) as cofactor.

It is found in the cytoplasm. It catalyses the reaction Endonucleolytic cleavage to 5'-phosphomonoester.. In terms of biological role, endonuclease that specifically degrades the RNA of RNA-DNA hybrids. This chain is Ribonuclease H, found in Alkalilimnicola ehrlichii (strain ATCC BAA-1101 / DSM 17681 / MLHE-1).